Here is a 325-residue protein sequence, read N- to C-terminus: Terpene synthase 11 (325 aa).

Residues 97-102 carry the DDxx(x)D/E motif motif; it reads DDEYLE. An NDxxSxxxD/E motif motif is present at residues 227-235; it reads NDIYSFVKE.

This sequence belongs to the terpene synthase family.

The catalysed reaction is (2E,6E)-farnesyl diphosphate = (E)-beta-farnesene + diphosphate. It catalyses the reaction (2E,6E)-farnesyl diphosphate = (3E,6E)-alpha-farnesene + diphosphate. It carries out the reaction geranylgeranyl diphosphate + H2O = (S)-(+)-nephthenol + diphosphate. Its function is as follows. Terpene synthase that converts its substrate farnesyl diphosphate (FPP) into the sesquiterpenes (E)-beta-farnesene and (E,E)-alpha-farnesene. TPS11 also converts geranylgeranyl diphosphate (GGPP) into the diterpene (S)-nephthenol. This Dictyostelium purpureum (Slime mold) protein is Terpene synthase 11.